The sequence spans 542 residues: CTP synthase (542 aa).

Residues 1–265 (MTRYIFVTGG…DDIVVERFGL (265 aa)) are amidoligase domain. Position 13 (Ser-13) interacts with CTP. Residue Ser-13 participates in UTP binding. ATP-binding positions include 14 to 19 (SLGKGI) and Asp-71. Residues Asp-71 and Glu-139 each coordinate Mg(2+). CTP contacts are provided by residues 146 to 148 (DIE), 186 to 191 (KTKPTQ), and Lys-222. Residues 186-191 (KTKPTQ) and Lys-222 contribute to the UTP site. A Glutamine amidotransferase type-1 domain is found at 290–541 (TIAMVGKYME…VNAALKYSGK (252 aa)). Gly-351 lines the L-glutamine pocket. Cys-378 serves as the catalytic Nucleophile; for glutamine hydrolysis. L-glutamine contacts are provided by residues 379–382 (LGMQ), Glu-402, and Arg-469. Catalysis depends on residues His-514 and Glu-516.

Belongs to the CTP synthase family. In terms of assembly, homotetramer.

The catalysed reaction is UTP + L-glutamine + ATP + H2O = CTP + L-glutamate + ADP + phosphate + 2 H(+). The enzyme catalyses L-glutamine + H2O = L-glutamate + NH4(+). It carries out the reaction UTP + NH4(+) + ATP = CTP + ADP + phosphate + 2 H(+). The protein operates within pyrimidine metabolism; CTP biosynthesis via de novo pathway; CTP from UDP: step 2/2. With respect to regulation, allosterically activated by GTP, when glutamine is the substrate; GTP has no effect on the reaction when ammonia is the substrate. The allosteric effector GTP functions by stabilizing the protein conformation that binds the tetrahedral intermediate(s) formed during glutamine hydrolysis. Inhibited by the product CTP, via allosteric rather than competitive inhibition. In terms of biological role, catalyzes the ATP-dependent amination of UTP to CTP with either L-glutamine or ammonia as the source of nitrogen. Regulates intracellular CTP levels through interactions with the four ribonucleotide triphosphates. The chain is CTP synthase from Pseudomonas aeruginosa (strain LESB58).